The sequence spans 1000 residues: uncharacterized protein (1000 aa).

Basic and acidic residues predominate over residues 787-809 (RQYEKLKRQRAKSETERHQERHG). Residues 787–812 (RQYEKLKRQRAKSETERHQERHGKLS) form a disordered region.

This is an uncharacterized protein from Picosynechococcus sp. (strain ATCC 27264 / PCC 7002 / PR-6) (Agmenellum quadruplicatum).